A 277-amino-acid chain; its full sequence is Undecaprenyl-diphosphatase (277 aa).

Helical transmembrane passes span 88–108 (MGWL…LFQD), 117–137 (MWIV…ADAV), 157–179 (FAQA…AGLL), 191–211 (SFLL…YKVV), 227–247 (LATV…LKFV), and 255–275 (FVWY…FGVI).

It belongs to the UppP family.

It is found in the cell membrane. The catalysed reaction is di-trans,octa-cis-undecaprenyl diphosphate + H2O = di-trans,octa-cis-undecaprenyl phosphate + phosphate + H(+). Functionally, catalyzes the dephosphorylation of undecaprenyl diphosphate (UPP). Confers resistance to bacitracin. This Pseudarthrobacter chlorophenolicus (strain ATCC 700700 / DSM 12829 / CIP 107037 / JCM 12360 / KCTC 9906 / NCIMB 13794 / A6) (Arthrobacter chlorophenolicus) protein is Undecaprenyl-diphosphatase.